A 198-amino-acid polypeptide reads, in one-letter code: uncharacterized protein (198 aa).

This sequence to A.aeolicus aq_1211 and aq_1583.

This is an uncharacterized protein from Aquifex aeolicus (strain VF5).